An 84-amino-acid chain; its full sequence is Cytochrome b559 subunit alpha (84 aa).

The helical transmembrane segment at 22 to 36 (IIHSITIPSLFVSGW) threads the bilayer. Histidine 24 lines the heme pocket.

It belongs to the PsbE/PsbF family. Heterodimer of an alpha subunit and a beta subunit. PSII is composed of 1 copy each of membrane proteins PsbA, PsbB, PsbC, PsbD, PsbE, PsbF, PsbH, PsbI, PsbJ, PsbK, PsbL, PsbM, PsbT, PsbX, PsbY, PsbZ, Psb30/Ycf12, at least 3 peripheral proteins of the oxygen-evolving complex and a large number of cofactors. It forms dimeric complexes. The cofactor is heme b.

The protein localises to the plastid. It is found in the chloroplast thylakoid membrane. Its function is as follows. This b-type cytochrome is tightly associated with the reaction center of photosystem II (PSII). PSII is a light-driven water:plastoquinone oxidoreductase that uses light energy to abstract electrons from H(2)O, generating O(2) and a proton gradient subsequently used for ATP formation. It consists of a core antenna complex that captures photons, and an electron transfer chain that converts photonic excitation into a charge separation. The protein is Cytochrome b559 subunit alpha of Phaeodactylum tricornutum (strain CCAP 1055/1).